Consider the following 84-residue polypeptide: uncharacterized protein (84 aa).

A helical membrane pass occupies residues 25–45; sequence ILMTVAGFIIAFAILVFQISF.

It localises to the membrane. This is an uncharacterized protein from Bacillus anthracis.